Reading from the N-terminus, the 408-residue chain is Glutathione-independent formaldehyde dehydrogenase (408 aa).

Cysteine 61 contacts Zn(2+). NAD(+) is bound by residues glycine 62, serine 63, and histidine 66. Positions 82, 112, 115, 118, 126, and 184 each coordinate Zn(2+). NAD(+) is bound by residues valine 212, aspartate 232, arginine 237, valine 277, histidine 284, proline 311, leucine 313, glycine 348, and threonine 350.

It belongs to the zinc-containing alcohol dehydrogenase family. Requires Zn(2+) as cofactor.

The catalysed reaction is formaldehyde + NAD(+) + H2O = formate + NADH + 2 H(+). With respect to regulation, activity is not inhibited by EDTA, which is probably not sufficient to displace the bound metal. In terms of biological role, dehydrogenase that catalyzes the NAD(+)-dependent oxidation of formaldehyde. Exhibits lower activity with acetaldehyde (about 10-fold lower than for formaldehyde), but cannot use methanol, ethanol, 1-butanol, glyoxal or formic acid. Is involved in formaldehyde detoxification. The sequence is that of Glutathione-independent formaldehyde dehydrogenase from Bacillus subtilis (strain 168).